Reading from the N-terminus, the 246-residue chain is Aquaporin SIP1-1 (246 aa).

2 helical membrane passes run 13-33 (AAVT…TAAV) and 45-65 (YALL…NLLC). An NPA 1 motif is present at residues 74-76 (NPT). The next 3 helical transmembrane spans lie at 95 to 115 (FPLA…AMAI), 139 to 159 (GAAA…WIIV), and 166 to 186 (IVKT…GAAY). The NPA 2 motif lies at 192–194 (NPA). A helical transmembrane segment spans residues 214 to 234 (VYWICPFVGAVLAAWVFRAVF).

It belongs to the MIP/aquaporin (TC 1.A.8) family. SIP (TC 1.A.8.10) subfamily. As to expression, expressed in roots, leaves and anthers.

It localises to the membrane. In terms of biological role, aquaporins facilitate the transport of water and small neutral solutes across cell membranes. This Oryza sativa subsp. japonica (Rice) protein is Aquaporin SIP1-1 (SIP1-1).